Consider the following 211-residue polypeptide: Protein-L-isoaspartate O-methyltransferase (211 aa).

Serine 60 is a catalytic residue.

This sequence belongs to the methyltransferase superfamily. L-isoaspartyl/D-aspartyl protein methyltransferase family.

The protein localises to the cytoplasm. The enzyme catalyses [protein]-L-isoaspartate + S-adenosyl-L-methionine = [protein]-L-isoaspartate alpha-methyl ester + S-adenosyl-L-homocysteine. Its function is as follows. Catalyzes the methyl esterification of L-isoaspartyl residues in peptides and proteins that result from spontaneous decomposition of normal L-aspartyl and L-asparaginyl residues. It plays a role in the repair and/or degradation of damaged proteins. The sequence is that of Protein-L-isoaspartate O-methyltransferase from Pseudomonas fluorescens (strain ATCC BAA-477 / NRRL B-23932 / Pf-5).